Here is a 74-residue protein sequence, read N- to C-terminus: Translation initiation factor IF-1 (74 aa).

The S1-like domain maps to methionine 1–lysine 72.

This sequence belongs to the IF-1 family. As to quaternary structure, component of the 30S ribosomal translation pre-initiation complex which assembles on the 30S ribosome in the order IF-2 and IF-3, IF-1 and N-formylmethionyl-tRNA(fMet); mRNA recruitment can occur at any time during PIC assembly.

The protein resides in the cytoplasm. In terms of biological role, one of the essential components for the initiation of protein synthesis. Stabilizes the binding of IF-2 and IF-3 on the 30S subunit to which N-formylmethionyl-tRNA(fMet) subsequently binds. Helps modulate mRNA selection, yielding the 30S pre-initiation complex (PIC). Upon addition of the 50S ribosomal subunit IF-1, IF-2 and IF-3 are released leaving the mature 70S translation initiation complex. The chain is Translation initiation factor IF-1 from Thermotoga petrophila (strain ATCC BAA-488 / DSM 13995 / JCM 10881 / RKU-1).